We begin with the raw amino-acid sequence, 98 residues long: Large ribosomal subunit protein uL23c (98 aa).

The protein belongs to the universal ribosomal protein uL23 family. As to quaternary structure, part of the 50S ribosomal subunit.

The protein localises to the plastid. Its subcellular location is the chloroplast. Its function is as follows. Binds to 23S rRNA. The sequence is that of Large ribosomal subunit protein uL23c (rpl23) from Thalassiosira pseudonana (Marine diatom).